Here is an 80-residue protein sequence, read N- to C-terminus: MKTGLKRVKLHVKKNDMVVVLSGNDRGKSGKVLRVYPVKNRVIIEGVNIRKRHMRPTQSNPQGSIIEREFPIHASNVKKS.

The disordered stretch occupies residues 53 to 80 (HMRPTQSNPQGSIIEREFPIHASNVKKS).

This sequence belongs to the universal ribosomal protein uL24 family. As to quaternary structure, part of the 50S ribosomal subunit.

Its function is as follows. One of two assembly initiator proteins, it binds directly to the 5'-end of the 23S rRNA, where it nucleates assembly of the 50S subunit. Functionally, one of the proteins that surrounds the polypeptide exit tunnel on the outside of the subunit. The protein is Large ribosomal subunit protein uL24 of Chlorobium luteolum (strain DSM 273 / BCRC 81028 / 2530) (Pelodictyon luteolum).